Here is a 79-residue protein sequence, read N- to C-terminus: Sulfur carrier protein TusA (79 aa).

C16 serves as the catalytic Cysteine persulfide intermediate.

The protein belongs to the sulfur carrier protein TusA family.

It localises to the cytoplasm. Sulfur carrier protein which probably makes part of a sulfur-relay system. This chain is Sulfur carrier protein TusA, found in Pseudomonas paraeruginosa (strain DSM 24068 / PA7) (Pseudomonas aeruginosa (strain PA7)).